The sequence spans 178 residues: Cytochrome b6-f complex iron-sulfur subunit (178 aa).

The chain crosses the membrane as a helical span at residues 20-42 (LLTFGTATGVALGALYPVANYFM). Positions 65 to 161 (KTGWLATHQA…VDIEDDAVLV (97 aa)) constitute a Rieske domain. Cys107, His109, Cys125, and His128 together coordinate [2Fe-2S] cluster. Cys112 and Cys127 form a disulfide bridge.

It belongs to the Rieske iron-sulfur protein family. As to quaternary structure, the 4 large subunits of the cytochrome b6-f complex are cytochrome b6, subunit IV (17 kDa polypeptide, PetD), cytochrome f and the Rieske protein, while the 4 small subunits are PetG, PetL, PetM and PetN. The complex functions as a dimer. [2Fe-2S] cluster serves as cofactor.

The protein resides in the cellular thylakoid membrane. The enzyme catalyses 2 oxidized [plastocyanin] + a plastoquinol + 2 H(+)(in) = 2 reduced [plastocyanin] + a plastoquinone + 4 H(+)(out). In terms of biological role, component of the cytochrome b6-f complex, which mediates electron transfer between photosystem II (PSII) and photosystem I (PSI), cyclic electron flow around PSI, and state transitions. The polypeptide is Cytochrome b6-f complex iron-sulfur subunit (Prochlorococcus marinus (strain MIT 9301)).